The sequence spans 275 residues: Ribosomal RNA small subunit methyltransferase A (275 aa).

S-adenosyl-L-methionine-binding residues include asparagine 21, leucine 23, glycine 48, glutamate 69, aspartate 94, and asparagine 115.

This sequence belongs to the class I-like SAM-binding methyltransferase superfamily. rRNA adenine N(6)-methyltransferase family. RsmA subfamily.

Its subcellular location is the cytoplasm. It carries out the reaction adenosine(1518)/adenosine(1519) in 16S rRNA + 4 S-adenosyl-L-methionine = N(6)-dimethyladenosine(1518)/N(6)-dimethyladenosine(1519) in 16S rRNA + 4 S-adenosyl-L-homocysteine + 4 H(+). Its function is as follows. Specifically dimethylates two adjacent adenosines (A1518 and A1519) in the loop of a conserved hairpin near the 3'-end of 16S rRNA in the 30S particle. May play a critical role in biogenesis of 30S subunits. This chain is Ribosomal RNA small subunit methyltransferase A, found in Clostridium botulinum (strain ATCC 19397 / Type A).